The primary structure comprises 767 residues: Photosystem I P700 chlorophyll a apoprotein A1 (767 aa).

8 helical membrane passes run Ile-72–Ala-95, Leu-158–His-181, Leu-197–Leu-221, Ile-305–Tyr-323, Trp-364–Tyr-387, Ile-403–Ile-429, Ala-451–His-473, and Phe-548–Leu-566. Residues Cys-590 and Cys-599 each contribute to the [4Fe-4S] cluster site. A run of 2 helical transmembrane segments spans residues His-606–Trp-627 and Thr-681–Phe-703. His-692 lines the chlorophyll a' pocket. The chlorophyll a site is built by Met-700 and Tyr-708. Phylloquinone is bound at residue Trp-709. A helical membrane pass occupies residues Ala-741–Ala-761.

Belongs to the PsaA/PsaB family. The PsaA/B heterodimer binds the P700 chlorophyll special pair and subsequent electron acceptors. PSI consists of a core antenna complex that captures photons, and an electron transfer chain that converts photonic excitation into a charge separation. The cyanobacterial PSI reaction center is composed of one copy each of PsaA,B,C,D,E,F,I,J,K,L,M and X, and forms trimeric complexes. Requires PSI electron transfer chain: 5 chlorophyll a, 1 chlorophyll a', 2 phylloquinones and 3 4Fe-4S clusters. PSI core antenna: 90 chlorophyll a, 22 carotenoids, 3 phospholipids and 1 galactolipid. P700 is a chlorophyll a/chlorophyll a' dimer, A0 is one or more chlorophyll a, A1 is one or both phylloquinones and FX is a shared 4Fe-4S iron-sulfur center. as cofactor.

The protein localises to the cellular thylakoid membrane. The enzyme catalyses reduced [plastocyanin] + hnu + oxidized [2Fe-2S]-[ferredoxin] = oxidized [plastocyanin] + reduced [2Fe-2S]-[ferredoxin]. Its function is as follows. PsaA and PsaB bind P700, the primary electron donor of photosystem I (PSI), as well as the electron acceptors A0, A1 and FX. PSI is a plastocyanin/cytochrome c6-ferredoxin oxidoreductase, converting photonic excitation into a charge separation, which transfers an electron from the donor P700 chlorophyll pair to the spectroscopically characterized acceptors A0, A1, FX, FA and FB in turn. Oxidized P700 is reduced on the lumenal side of the thylakoid membrane by plastocyanin or cytochrome c6. This chain is Photosystem I P700 chlorophyll a apoprotein A1, found in Synechococcus sp. (strain CC9311).